Reading from the N-terminus, the 155-residue chain is 3-dehydroquinate dehydratase (155 aa).

Y22 serves as the catalytic Proton acceptor. Substrate is bound by residues N73, H79, and D86. Catalysis depends on H99, which acts as the Proton donor. Substrate-binding positions include 100 to 101 (IS) and R110.

This sequence belongs to the type-II 3-dehydroquinase family. As to quaternary structure, homododecamer.

The enzyme catalyses 3-dehydroquinate = 3-dehydroshikimate + H2O. Its pathway is metabolic intermediate biosynthesis; chorismate biosynthesis; chorismate from D-erythrose 4-phosphate and phosphoenolpyruvate: step 3/7. In terms of biological role, catalyzes a trans-dehydration via an enolate intermediate. This chain is 3-dehydroquinate dehydratase, found in Campylobacter hominis (strain ATCC BAA-381 / DSM 21671 / CCUG 45161 / LMG 19568 / NCTC 13146 / CH001A).